Consider the following 78-residue polypeptide: Putative capsid protein ORF9 (78 aa).

The first 29 residues, 1–29 (MIKLVLLVAAIAIFGTGFITVIINQFTSA), serve as a signal peptide directing secretion. A helical transmembrane segment spans residues 52–72 (VLFSHPLMLTISSLYIVGFIV).

This sequence belongs to the plectrovirus ORF9 family. As to quaternary structure, homomultimerizes.

Its subcellular location is the virion. The protein localises to the host membrane. In terms of biological role, may self assemble to form a helical capsid wrapping up the viral genomic DNA. The virion assembly and budding take place at the host inner membrane. The protein is Putative capsid protein ORF9 of Spiroplasma virus SpV1-C74 (SpV1).